The chain runs to 710 residues: Polyribonucleotide nucleotidyltransferase (710 aa).

Residues aspartate 488 and aspartate 494 each coordinate Mg(2+). A KH domain is found at 555–614; that stretch reads PRIETITIPTDKIRDVIGSGGKVIREIVETTGAKVDVNDDGVIKVSSSDGASIKAALDWI. Positions 624–692 constitute an S1 motif domain; that stretch reads GQIYKGKVVK…DRGKVRLSMK (69 aa).

It belongs to the polyribonucleotide nucleotidyltransferase family. Mg(2+) is required as a cofactor.

It localises to the cytoplasm. The catalysed reaction is RNA(n+1) + phosphate = RNA(n) + a ribonucleoside 5'-diphosphate. Involved in mRNA degradation. Catalyzes the phosphorolysis of single-stranded polyribonucleotides processively in the 3'- to 5'-direction. The chain is Polyribonucleotide nucleotidyltransferase from Maricaulis maris (strain MCS10) (Caulobacter maris).